Consider the following 496-residue polypeptide: Zinc finger and SCAN domain-containing protein 5C (496 aa).

Positions 1 to 19 are enriched in polar residues; sequence MAANCTSSWSLGESCNSPG. Residues 1 to 38 form a disordered region; the sequence is MAANCTSSWSLGESCNSPGSEPPQSMPSPATQLGNHDS. The region spanning 44–126 is the SCAN box domain; it reads HVNFRMFSCP…DLLRNNRRPK (83 aa). Disordered stretches follow at residues 149–188 and 203–347; these read EAPA…TLPR and PETT…HPSG. A compositionally biased stretch (polar residues) spans 161-171; it reads VSSQRTSSVNQ. A compositionally biased stretch (basic and acidic residues) spans 210–223; the sequence is GDPKALRPKPTLEK. Residues 234 to 247 are compositionally biased toward polar residues; that stretch reads GLTSPEPQLPNSPT. The span at 253–263 shows a compositional bias: basic and acidic residues; the sequence is KEGKEPQKRAS. 5 consecutive C2H2-type zinc fingers follow at residues 356-378, 384-406, 412-434, 440-462, and 468-490; these read FACE…TRSH, FQCN…QRTH, YTCD…KRSH, FECK…QRIH, and HKCS…QKTH.

It localises to the nucleus. Its function is as follows. May be involved in transcriptional regulation. This is Zinc finger and SCAN domain-containing protein 5C from Homo sapiens (Human).